The chain runs to 571 residues: Germacrene B synthase TPS16CC (571 aa).

(2E,6E)-farnesyl diphosphate is bound by residues Arg-287, Asp-324, Asp-328, Arg-465, and Asp-468. Positions 324 and 328 each coordinate Mg(2+). Positions 324–328 match the DDXXD motif motif; that stretch reads DDIYD. Residues Asp-468, Ser-472, and Glu-476 each contribute to the Mg(2+) site.

This sequence belongs to the terpene synthase family. Tpsb subfamily. The cofactor is Mg(2+). Requires Mn(2+) as cofactor. In terms of tissue distribution, highly expressed in glandular trichomes.

The catalysed reaction is (2E,6E)-farnesyl diphosphate = (1E,4E)-germacrene B + diphosphate. It participates in secondary metabolite biosynthesis; terpenoid biosynthesis. Its function is as follows. Involved in sesquiterpene olefins biosynthesis, constituants of cannabinoids and terpenoids-rich resins. Catalyzes mainly the conversion of (2E)-farnesyl diphosphate to germacrene B, which is spontaneously converted to gamma-elemene as a thermal degradation product. This Cannabis sativa (Hemp) protein is Germacrene B synthase TPS16CC.